The chain runs to 752 residues: MTAEEVDKESDPAIEDVKSDYDAIELGNENENENEVVSLDSMKAVISRASSELKHENDQGEERDLGSVEKDPILERYHAACKQGDMKTLREMVESKVIDLSNDYDPKERVSGLHWACINNRLSAVKYLAGAGAEVNFKGGELDATPLHWASKSGLVYIVDELLKAGADPNITDSQGYNLLHTSVFSSNIMLVIYVLFFVVDGKEDVDQPDPHQRTALQWATYQADALTVENLLKFNADVKNADDAGFTALHWGTVKGSIPVMDLLIKHGSDFFQTTNDGKNCFTIGKELYSIGSLEASLYKNGFDKNGFPLPQYFSASTGKMLTFFLPWVLIPLVFYIFSKITFFIALLINTIVLVISGLVLSRLVVPSYLLSKRHPILNSPLLAGILSGTIAIAFFIWFTKISILTFTEKPVGNIIMLGFFIGLITLFIGLMKSDPGYIPGTVDHDKVRETIKELLSLGKFDAKHFCVHTWIRIPLRSKYDRDSACLISAFDHFCPWVYNQIGLLNHKLFYMFVVLLEISVWWFLPLMMEYFDELEDYLENRKGKHFGDCHFLGDEDLCFGLHHDTFNFLLLCWVIFQAFWVLCLIAVQTVQMLKGVTDYEFVQINKKLKSNGTTTEDIFSSTPPELMSEELIAELDAPALDPRQVPQRTCFTVCCTLLGLDKLVTMIKSVLRLKSDEPSSRSSHLSALARIPTDYGWKQNLKDFWLLPDTSSPLWRRILLPPKDSHALLNGMEVDYYTLYTLPNATEELV.

2 disordered regions span residues 1-21 and 49-68; these read MTAEEVDKESDPAIEDVKSDY and ASSELKHENDQGEERDLGSV. Residues 1–318 lie on the Cytoplasmic side of the membrane; sequence MTAEEVDKES…FPLPQYFSAS (318 aa). Basic and acidic residues-rich tracts occupy residues 9 to 21 and 51 to 68; these read ESDPAIEDVKSDY and SELKHENDQGEERDLGSV. 6 ANK repeats span residues 72–102, 108–137, 142–171, 175–208, 212–241, and 245–274; these read PILERYHAACKQGDMKTLREMVESKVIDLSN, ERVSGLHWACINNRLSAVKYLAGAGAEVNF, LDATPLHWASKSGLVYIVDELLKAGADPNI, QGYNLLHTSVFSSNIMLVIYVLFFVVDGKEDVDQ, HQRTALQWATYQADALTVENLLKFNADVKN, and AGFTALHWGTVKGSIPVMDLLIKHGSDFFQ. Residues 319 to 339 form a helical membrane-spanning segment; it reads TGKMLTFFLPWVLIPLVFYIF. At 340–341 the chain is on the lumenal side; the sequence is SK. A helical membrane pass occupies residues 342–362; that stretch reads ITFFIALLINTIVLVISGLVL. Topologically, residues 363-380 are cytoplasmic; it reads SRLVVPSYLLSKRHPILN. Residues 381-401 form a helical membrane-spanning segment; sequence SPLLAGILSGTIAIAFFIWFT. The Lumenal portion of the chain corresponds to 402 to 412; it reads KISILTFTEKP. A helical membrane pass occupies residues 413-433; that stretch reads VGNIIMLGFFIGLITLFIGLM. The Cytoplasmic portion of the chain corresponds to 434 to 509; the sequence is KSDPGYIPGT…YNQIGLLNHK (76 aa). A DHHC domain is found at 466–516; the sequence is HFCVHTWIRIPLRSKYDRDSACLISAFDHFCPWVYNQIGLLNHKLFYMFVV. Cysteine 496 acts as the S-palmitoyl cysteine intermediate in catalysis. A helical membrane pass occupies residues 510–530; sequence LFYMFVVLLEISVWWFLPLMM. Residues 531–567 lie on the Lumenal side of the membrane; sequence EYFDELEDYLENRKGKHFGDCHFLGDEDLCFGLHHDT. A helical transmembrane segment spans residues 568-588; sequence FNFLLLCWVIFQAFWVLCLIA. Residues 589–752 are Cytoplasmic-facing; it reads VQTVQMLKGV…TLPNATEELV (164 aa).

Belongs to the DHHC palmitoyltransferase family. AKR/ZDHHC17 subfamily.

Its subcellular location is the early endosome membrane. The protein resides in the golgi apparatus membrane. It carries out the reaction L-cysteinyl-[protein] + hexadecanoyl-CoA = S-hexadecanoyl-L-cysteinyl-[protein] + CoA. Functionally, palmitoyltransferase specific for casein kinase 1. This is Palmitoyltransferase AKR1 (AKR1) from Kluyveromyces lactis (strain ATCC 8585 / CBS 2359 / DSM 70799 / NBRC 1267 / NRRL Y-1140 / WM37) (Yeast).